We begin with the raw amino-acid sequence, 301 residues long: Oxygen-dependent coproporphyrinogen-III oxidase (301 aa).

Ser-92 provides a ligand contact to substrate. A divalent metal cation-binding residues include His-96 and His-106. The active-site Proton donor is the His-106. 108-110 (NVR) provides a ligand contact to substrate. A divalent metal cation-binding residues include His-145 and His-175. Residues 240 to 275 (YVEFNLVWDRGTLFGLQTGGRTESILMSMPPLVRWE) form an important for dimerization region. Residue 258–260 (GGR) coordinates substrate.

The protein belongs to the aerobic coproporphyrinogen-III oxidase family. In terms of assembly, homodimer. The cofactor is a divalent metal cation.

It localises to the cytoplasm. The enzyme catalyses coproporphyrinogen III + O2 + 2 H(+) = protoporphyrinogen IX + 2 CO2 + 2 H2O. It participates in porphyrin-containing compound metabolism; protoporphyrin-IX biosynthesis; protoporphyrinogen-IX from coproporphyrinogen-III (O2 route): step 1/1. Involved in the heme biosynthesis. Catalyzes the aerobic oxidative decarboxylation of propionate groups of rings A and B of coproporphyrinogen-III to yield the vinyl groups in protoporphyrinogen-IX. The sequence is that of Oxygen-dependent coproporphyrinogen-III oxidase from Cronobacter sakazakii (strain ATCC BAA-894) (Enterobacter sakazakii).